The sequence spans 452 residues: Phosphoglucosamine mutase (452 aa).

Serine 104 serves as the catalytic Phosphoserine intermediate. Mg(2+) is bound by residues serine 104, aspartate 244, aspartate 246, and aspartate 248. Position 104 is a phosphoserine (serine 104).

Belongs to the phosphohexose mutase family. Requires Mg(2+) as cofactor. Activated by phosphorylation.

The enzyme catalyses alpha-D-glucosamine 1-phosphate = D-glucosamine 6-phosphate. Functionally, catalyzes the conversion of glucosamine-6-phosphate to glucosamine-1-phosphate. The sequence is that of Phosphoglucosamine mutase from Pediococcus pentosaceus (strain ATCC 25745 / CCUG 21536 / LMG 10740 / 183-1w).